The sequence spans 73 residues: Large ribosomal subunit protein bL31 (73 aa).

The protein belongs to the bacterial ribosomal protein bL31 family. Type A subfamily. In terms of assembly, part of the 50S ribosomal subunit.

Functionally, binds the 23S rRNA. This Chelativorans sp. (strain BNC1) protein is Large ribosomal subunit protein bL31.